The sequence spans 108 residues: MNMTVDPRRKEKINRYKAPKNQGQSGGANEDMMPDYMNILGMIFSMCGLMMKLKWCAWFALYCSCISFASSRASDDAKQVLSSFMLSVSAVVMSYLQNPAAMTPPWAS.

The disordered stretch occupies residues 1–29; the sequence is MNMTVDPRRKEKINRYKAPKNQGQSGGAN. The helical transmembrane segment at 80–96 threads the bilayer; sequence VLSSFMLSVSAVVMSYL.

The protein belongs to the Asterix family.

The protein localises to the membrane. The polypeptide is Protein Asterix (Drosophila melanogaster (Fruit fly)).